The chain runs to 659 residues: DNA helicase/primase complex-associated protein (659 aa).

The protein belongs to the herpesviridae HEPA family. Associates with the primase and the helicase to form the helicase-primase complex. Interacts with the origin-binding protein. Interacts with the polymerase catalytic subunit.

It localises to the host nucleus. Its function is as follows. Component of the helicase/primase complex. Unwinds the DNA at the replication forks and generates single-stranded DNA for both leading and lagging strand synthesis. The primase synthesizes short RNA primers on the lagging strand that the polymerase presumably elongates using dNTPs. The primase-associated factor has no known catalytic activity in the complex and may serve to facilitate the formation of the replisome by directly interacting with the origin-binding protein and the polymerase. The protein is DNA helicase/primase complex-associated protein (U74) of Human herpesvirus 7 (strain JI) (HHV-7).